The sequence spans 194 residues: uncharacterized protein (194 aa).

Disordered regions lie at residues 1-21 and 73-97; these read MPKG…APPL and PATV…PWPS. Positions 73 to 96 are enriched in pro residues; it reads PATVPPPPPGLGPPSERPCPPPWP.

This is an uncharacterized protein from Mus musculus (Mouse).